Consider the following 319-residue polypeptide: Acetyl-coenzyme A carboxylase carboxyl transferase subunit alpha (319 aa).

The CoA carboxyltransferase C-terminal domain maps to 35-296; it reads NLDEEVQRLR…KAQLLADLND (262 aa).

This sequence belongs to the AccA family. Acetyl-CoA carboxylase is a heterohexamer composed of biotin carboxyl carrier protein (AccB), biotin carboxylase (AccC) and two subunits each of ACCase subunit alpha (AccA) and ACCase subunit beta (AccD).

The protein localises to the cytoplasm. It catalyses the reaction N(6)-carboxybiotinyl-L-lysyl-[protein] + acetyl-CoA = N(6)-biotinyl-L-lysyl-[protein] + malonyl-CoA. It participates in lipid metabolism; malonyl-CoA biosynthesis; malonyl-CoA from acetyl-CoA: step 1/1. Its function is as follows. Component of the acetyl coenzyme A carboxylase (ACC) complex. First, biotin carboxylase catalyzes the carboxylation of biotin on its carrier protein (BCCP) and then the CO(2) group is transferred by the carboxyltransferase to acetyl-CoA to form malonyl-CoA. This is Acetyl-coenzyme A carboxylase carboxyl transferase subunit alpha from Yersinia pseudotuberculosis serotype O:3 (strain YPIII).